A 414-amino-acid chain; its full sequence is Tryptophan synthase beta chain (414 aa).

Residues 1 to 12 (MVSTISRHDQNK) are compositionally biased toward basic and acidic residues. A disordered region spans residues 1 to 23 (MVSTISRHDQNKNNDYLNQPSKE). Residue K109 is modified to N6-(pyridoxal phosphate)lysine.

The protein belongs to the TrpB family. As to quaternary structure, tetramer of two alpha and two beta chains. Requires pyridoxal 5'-phosphate as cofactor.

The catalysed reaction is (1S,2R)-1-C-(indol-3-yl)glycerol 3-phosphate + L-serine = D-glyceraldehyde 3-phosphate + L-tryptophan + H2O. It functions in the pathway amino-acid biosynthesis; L-tryptophan biosynthesis; L-tryptophan from chorismate: step 5/5. The beta subunit is responsible for the synthesis of L-tryptophan from indole and L-serine. In Prochlorococcus marinus (strain MIT 9515), this protein is Tryptophan synthase beta chain.